The primary structure comprises 801 residues: Mediator of RNA polymerase II transcription subunit 25 (801 aa).

Low complexity-rich tracts occupy residues P647–A676, P687–L710, and P722–P735. Residues P647 to P735 are disordered. An LXXLL motif motif is present at residues L689–L693.

The protein belongs to the Mediator complex subunit 25 family. As to quaternary structure, component of the Mediator complex.

It localises to the nucleus. In terms of biological role, component of the Mediator complex, a coactivator involved in the regulated transcription of nearly all RNA polymerase II-dependent genes. Mediator functions as a bridge to convey information from gene-specific regulatory proteins to the basal RNA polymerase II transcription machinery. Mediator is recruited to promoters by direct interactions with regulatory proteins and serves as a scaffold for the assembly of a functional preinitiation complex with RNA polymerase II and the general transcription factors. This chain is Mediator of RNA polymerase II transcription subunit 25 (med25), found in Xenopus laevis (African clawed frog).